Consider the following 441-residue polypeptide: Insulinoma-associated protein 1 (441 aa).

Basic residues predominate over residues 1 to 12 (MPKGFLVKRSRK). Residues 1–20 (MPKGFLVKRSRKSPPVSYRV) form an SNAG domain region. Disordered regions lie at residues 1–31 (MPKGFLVKRSRKSPPVSYRVREEEEPRGESL), 43–189 (TGGA…KAIR), 205–224 (LKIKEGPVEPPRPRAASSGP), and 278–316 (RWHKPRPPVASTAQAKEEPLSDRDTPSPGASESGSEDGL). Positions 19–28 (RVREEEEPRG) are enriched in basic and acidic residues. Over residues 74–83 (NPDTVQQALY) the composition is skewed to polar residues. Positions 89–98 (VSREQRERKY) are enriched in basic and acidic residues. Low complexity-rich tracts occupy residues 138–147 (VSSSSSVSRS) and 169–180 (GATSSSAPSKPP). The C2H2-type 1 zinc finger occupies 258–280 (YRCPECHKVFSCPANLASHRRWH). Positions 292-302 (AKEEPLSDRDT) are enriched in basic and acidic residues. 3 consecutive C2H2-type zinc fingers follow at residues 317–339 (YECPRCARKFRRQAYLRKHLLSH), 372–395 (HPCPVCGETFPGKSSQERHIRLLH), and 400–423 (YPCKYCPATFYSSPGLTRHINKCH).

The protein belongs to the INSM1 family.

Its subcellular location is the nucleus. Functionally, may act as a transcriptional regulator. Plays a role in noradrenergic neuron, pancreatic and gastrointestinal endocrine cells differentiation during embryonic development. This chain is Insulinoma-associated protein 1 (insm1), found in Xenopus tropicalis (Western clawed frog).